The sequence spans 68 residues: Conotoxin Em11.5 (68 aa).

A signal peptide spans 1–26 (MMFRLTSVGCFLLVIACLNLFQVVLT). Intrachain disulfides connect C29–C43, C36–C48, C42–C52, and C47–C56. Position 60 is a phenylalanine amide (F60). The propeptide occupies 64–68 (ATFQE).

It belongs to the conotoxin I2 superfamily. In terms of tissue distribution, expressed by the venom duct.

The protein resides in the secreted. The protein is Conotoxin Em11.5 of Conus emaciatus (False virgin cone).